The sequence spans 339 residues: uncharacterized protein (339 aa).

28–35 is an ATP binding site; sequence GPINSGKT.

Belongs to the archaeal ATPase family.

This is an uncharacterized protein from Pyrococcus abyssi (strain GE5 / Orsay).